Here is a 949-residue protein sequence, read N- to C-terminus: General transcription factor II-I repeat domain-containing protein 2B (949 aa).

2 GTF2I-like repeats span residues 98–192 (QVHS…QLGG) and 323–417 (LSSI…SNVG).

Belongs to the TFII-I family. As to expression, ubiquitous.

Its subcellular location is the nucleus. In Homo sapiens (Human), this protein is General transcription factor II-I repeat domain-containing protein 2B (GTF2IRD2B).